The chain runs to 84 residues: uncharacterized protein (84 aa).

The next 2 membrane-spanning stretches (helical) occupy residues 7–27 (HVNF…ILCI) and 52–72 (ITII…INPC).

It is found in the membrane. This is an uncharacterized protein from Saccharomyces cerevisiae (strain ATCC 204508 / S288c) (Baker's yeast).